A 644-amino-acid polypeptide reads, in one-letter code: Protein SNOWY COTYLEDON 3 (644 aa).

Disordered regions lie at residues 1 to 129 (MVAA…TRTE), 162 to 252 (ETAT…DGRL), and 290 to 414 (SDTD…SRVR). The segment covering 53-77 (SPSPSHSTTTTTTTATSTSTSSSSS) has biased composition (low complexity). Residues 91 to 112 (LSRTTNSASNLVYTPSSLPKRS) show a composition bias toward polar residues. Over residues 172 to 190 (CTPERRRATPVRDQRENSK) the composition is skewed to basic and acidic residues. Polar residues-rich tracts occupy residues 290–302 (SDTD…STNG) and 314–332 (TRSL…QETN). Low complexity-rich tracts occupy residues 343-370 (SPQC…SSDS) and 397-412 (ATAT…SPSR). The short motif at 463–466 (QWRF) is the QWRF motif element.

The protein belongs to the QWRF family. As to expression, expressed in young developing tissues, such as seedlings, roots, flowers, buds and young siliques, and to a lesser extent in mature green tissues.

It localises to the peroxisome. Its function is as follows. Probable microtubule-associated peroxisomal protein required for chloroplast biogenesis and for the formation of the prolamellar body and prothylakoids in etioplasts. Not involved in peroxisomal metabolism, including mobilization of storage compounds during germination, fatty acid beta-oxydation or photorespiration. This is Protein SNOWY COTYLEDON 3 (SCO3) from Arabidopsis thaliana (Mouse-ear cress).